Reading from the N-terminus, the 212-residue chain is Putative inactive 6-phospho-alpha-glucosidase (212 aa).

4-70 (FSVVVAGGGS…PDIAFSYTTD (67 aa)) is an NAD(+) binding site. Positions 169 and 200 each coordinate Mn(2+).

It belongs to the glycosyl hydrolase 4 family.

The polypeptide is Putative inactive 6-phospho-alpha-glucosidase (Escherichia coli (strain K12)).